The sequence spans 339 residues: NADH-quinone oxidoreductase subunit H (339 aa).

Transmembrane regions (helical) follow at residues 9–29 (IFPLIIIALKVVAITIPLILC), 50–70 (PNVVGPFGLLQPIADAVKLLF), 82–102 (ILFILAPMITFILSLIGWAVI), 115–135 (VGVLYILAISSLSVYGIIIAG), 161–181 (MGLVIITVLLTNGTLNLSGII), 187–207 (MPWWIDLMLLPMGVVFFISVL), 235–255 (MGFALFFLGEYANMILVSAMT), 275–295 (IPGFFWFVFKVGFLLFCFLWI), and 311–331 (GWKVFLPLTLFWVVLVSSVLV).

This sequence belongs to the complex I subunit 1 family. In terms of assembly, NDH-1 is composed of 14 different subunits. Subunits NuoA, H, J, K, L, M, N constitute the membrane sector of the complex.

The protein localises to the cell inner membrane. The enzyme catalyses a quinone + NADH + 5 H(+)(in) = a quinol + NAD(+) + 4 H(+)(out). Functionally, NDH-1 shuttles electrons from NADH, via FMN and iron-sulfur (Fe-S) centers, to quinones in the respiratory chain. The immediate electron acceptor for the enzyme in this species is believed to be ubiquinone. Couples the redox reaction to proton translocation (for every two electrons transferred, four hydrogen ions are translocated across the cytoplasmic membrane), and thus conserves the redox energy in a proton gradient. This subunit may bind ubiquinone. In Rickettsia conorii (strain ATCC VR-613 / Malish 7), this protein is NADH-quinone oxidoreductase subunit H.